A 78-amino-acid chain; its full sequence is Sec-independent protein translocase protein TatA (78 aa).

Residues 1–21 traverse the membrane as a helical segment; that stretch reads MGSLSIWHWIVVLAVVLLLFG. The interval 43 to 78 is disordered; sequence LAEDDEPAKTPAAPPEAPRPLPHQTSSAAEAEKKPV. Over residues 54 to 63 the composition is skewed to pro residues; that stretch reads AAPPEAPRPL.

It belongs to the TatA/E family. In terms of assembly, the Tat system comprises two distinct complexes: a TatABC complex, containing multiple copies of TatA, TatB and TatC subunits, and a separate TatA complex, containing only TatA subunits. Substrates initially bind to the TatABC complex, which probably triggers association of the separate TatA complex to form the active translocon.

The protein resides in the cell inner membrane. Its function is as follows. Part of the twin-arginine translocation (Tat) system that transports large folded proteins containing a characteristic twin-arginine motif in their signal peptide across membranes. TatA could form the protein-conducting channel of the Tat system. This is Sec-independent protein translocase protein TatA from Xanthobacter autotrophicus (strain ATCC BAA-1158 / Py2).